The following is a 164-amino-acid chain: Phosphopantetheine adenylyltransferase (164 aa).

Residue serine 9 coordinates substrate. Residues 9–10 and histidine 17 contribute to the ATP site; that span reads SF. The substrate site is built by lysine 41, leucine 78, and arginine 92. Residues 93–95, glutamate 103, and 128–134 contribute to the ATP site; these read GLR and GRVITST.

Belongs to the bacterial CoaD family. Homohexamer. It depends on Mg(2+) as a cofactor.

The protein resides in the cytoplasm. The catalysed reaction is (R)-4'-phosphopantetheine + ATP + H(+) = 3'-dephospho-CoA + diphosphate. It functions in the pathway cofactor biosynthesis; coenzyme A biosynthesis; CoA from (R)-pantothenate: step 4/5. Reversibly transfers an adenylyl group from ATP to 4'-phosphopantetheine, yielding dephospho-CoA (dPCoA) and pyrophosphate. In Bartonella bacilliformis (strain ATCC 35685 / KC583 / Herrer 020/F12,63), this protein is Phosphopantetheine adenylyltransferase.